The chain runs to 240 residues: ATP-dependent Clp protease proteolytic subunit 2 (240 aa).

Ser132 serves as the catalytic Nucleophile. His157 is an active-site residue.

The protein belongs to the peptidase S14 family. In terms of assembly, fourteen ClpP subunits assemble into 2 heptameric rings which stack back to back to give a disk-like structure with a central cavity, resembling the structure of eukaryotic proteasomes.

It localises to the cytoplasm. It catalyses the reaction Hydrolysis of proteins to small peptides in the presence of ATP and magnesium. alpha-casein is the usual test substrate. In the absence of ATP, only oligopeptides shorter than five residues are hydrolyzed (such as succinyl-Leu-Tyr-|-NHMec, and Leu-Tyr-Leu-|-Tyr-Trp, in which cleavage of the -Tyr-|-Leu- and -Tyr-|-Trp bonds also occurs).. Functionally, cleaves peptides in various proteins in a process that requires ATP hydrolysis. Has a chymotrypsin-like activity. Plays a major role in the degradation of misfolded proteins. This Synechococcus elongatus (strain ATCC 33912 / PCC 7942 / FACHB-805) (Anacystis nidulans R2) protein is ATP-dependent Clp protease proteolytic subunit 2.